A 409-amino-acid chain; its full sequence is Lipoyl synthase, mitochondrial (409 aa).

The disordered stretch occupies residues 21 to 41 (QQQVPPSEEPRNESGAANPPL). [4Fe-4S] cluster-binding residues include cysteine 125, cysteine 130, cysteine 136, cysteine 159, cysteine 163, cysteine 166, and serine 375. The region spanning 142–364 (EEGDGTATAT…EKEALDMGFL (223 aa)) is the Radical SAM core domain.

The protein belongs to the radical SAM superfamily. Lipoyl synthase family. [4Fe-4S] cluster serves as cofactor.

Its subcellular location is the mitochondrion. It catalyses the reaction [[Fe-S] cluster scaffold protein carrying a second [4Fe-4S](2+) cluster] + N(6)-octanoyl-L-lysyl-[protein] + 2 oxidized [2Fe-2S]-[ferredoxin] + 2 S-adenosyl-L-methionine + 4 H(+) = [[Fe-S] cluster scaffold protein] + N(6)-[(R)-dihydrolipoyl]-L-lysyl-[protein] + 4 Fe(3+) + 2 hydrogen sulfide + 2 5'-deoxyadenosine + 2 L-methionine + 2 reduced [2Fe-2S]-[ferredoxin]. It functions in the pathway protein modification; protein lipoylation via endogenous pathway; protein N(6)-(lipoyl)lysine from octanoyl-[acyl-carrier-protein]: step 2/2. Its function is as follows. Catalyzes the radical-mediated insertion of two sulfur atoms into the C-6 and C-8 positions of the octanoyl moiety bound to the lipoyl domains of lipoate-dependent enzymes, thereby converting the octanoylated domains into lipoylated derivatives. This chain is Lipoyl synthase, mitochondrial, found in Trypanosoma brucei gambiense (strain MHOM/CI/86/DAL972).